We begin with the raw amino-acid sequence, 451 residues long: Interferon-related developmental regulator 1 (451 aa).

Basic residues predominate over residues 1–10 (MPKNKKRNTP). Residues 1 to 69 (MPKNKKRNTP…PSSFAEDGPE (69 aa)) form a disordered region. The span at 23–33 (AAAATAATAGG) shows a compositional bias: low complexity. Residues 49 to 61 (ETMSHCSGYSDPS) are compositionally biased toward polar residues.

It belongs to the IFRD family. Interacts with PSIP1/LEDGF. Expressed in a variety of tissues.

In terms of biological role, could play a role in regulating gene activity in the proliferative and/or differentiative pathways induced by NGF. May be an autocrine factor that attenuates or amplifies the initial ligand-induced signal. This chain is Interferon-related developmental regulator 1 (IFRD1), found in Homo sapiens (Human).